Consider the following 341-residue polypeptide: UDP-3-O-(3-hydroxymyristoyl)glucosamine N-acyltransferase (341 aa).

The Proton acceptor role is filled by H239.

The protein belongs to the transferase hexapeptide repeat family. LpxD subfamily. In terms of assembly, homotrimer.

It carries out the reaction a UDP-3-O-[(3R)-3-hydroxyacyl]-alpha-D-glucosamine + a (3R)-hydroxyacyl-[ACP] = a UDP-2-N,3-O-bis[(3R)-3-hydroxyacyl]-alpha-D-glucosamine + holo-[ACP] + H(+). The catalysed reaction is UDP-3-O-[(3R)-3-hydroxytetradecanoyl]-alpha-D-glucosamine + (3R)-hydroxytetradecanoyl-[ACP] = UDP-2-N,3-O-bis[(3R)-3-hydroxytetradecanoyl]-alpha-D-glucosamine + holo-[ACP] + H(+). The protein operates within glycolipid biosynthesis; lipid IV(A) biosynthesis; lipid IV(A) from (3R)-3-hydroxytetradecanoyl-[acyl-carrier-protein] and UDP-N-acetyl-alpha-D-glucosamine: step 3/6. Catalyzes the N-acylation of UDP-3-O-(hydroxytetradecanoyl)glucosamine using 3-hydroxytetradecanoyl-ACP as the acyl donor. Is involved in the biosynthesis of lipid A, a phosphorylated glycolipid that anchors the lipopolysaccharide to the outer membrane of the cell. The sequence is that of UDP-3-O-(3-hydroxymyristoyl)glucosamine N-acyltransferase from Escherichia coli (strain UTI89 / UPEC).